We begin with the raw amino-acid sequence, 491 residues long: MNAAAEAEFNILLATDSYKVTHYKQYPPNTSKVYSYFECREKKTENSKIRKVKYEETVFYGLQYILNKYLKGKVVTKEKIQEAKEVYKEHFQDDVFNEKGWNYILEKYDGHLPIEVKAVPEGSVIPRGNVLFTVENTDPECYWLTNWIETILVQSWYPITVATNSREQKKILAKYLLETSGNLDGLEYKLHDFGYRGVSSQETAGIGASAHLVNFKGTDTVAGIALIKKYYGTKDPVPGYSVPAAEHSTITAWGKDHEKDAFEHIVTQFSSVPVSVVSDSYDIYNACEKIWGEDLRHLIVSRSTEAPLIIRPDSGNPLDTVLKVLDILGKKFPVTENSKGYKLLPPYLRVIQGDGVDINTLQEIVEGMKQKKWSIENIAFGSGGALLQKLTRDLLNCSFKCSYVVTNGLGINVFKDPVADPNKRSKKGRLSLHRTPGGNFVTLEEGKGDLEEYGHDLLHTVFKNGKVTKSYSFDEVRKNAQLNIELEAAPH.

An N-acetylmethionine modification is found at methionine 1. Phosphotyrosine is present on tyrosine 188. Residue arginine 196 participates in diphosphate binding. Position 219 (aspartate 219) interacts with beta-nicotinamide D-ribonucleotide. The diphosphate site is built by histidine 247 and arginine 311. Beta-nicotinamide D-ribonucleotide contacts are provided by residues 311–313, 353–354, glycine 384, and arginine 392; these read RPD and GD. At serine 472 the chain carries Phosphoserine.

This sequence belongs to the NAPRTase family. As to quaternary structure, homodimer.

It is found in the nucleus. It localises to the cytoplasm. The protein resides in the secreted. The catalysed reaction is beta-nicotinamide D-ribonucleotide + diphosphate = 5-phospho-alpha-D-ribose 1-diphosphate + nicotinamide + H(+). It functions in the pathway cofactor biosynthesis; NAD(+) biosynthesis; nicotinamide D-ribonucleotide from 5-phospho-alpha-D-ribose 1-diphosphate and nicotinamide: step 1/1. Catalyzes the condensation of nicotinamide with 5-phosphoribosyl-1-pyrophosphate to yield nicotinamide mononucleotide, an intermediate in the biosynthesis of NAD. It is the rate limiting component in the mammalian NAD biosynthesis pathway. The secreted form behaves both as a cytokine with immunomodulating properties and an adipokine with anti-diabetic properties, it has no enzymatic activity, partly because of lack of activation by ATP, which has a low level in extracellular space and plasma. Plays a role in the modulation of circadian clock function. Plays a role in the modulation of circadian clock function. NAMPT-dependent oscillatory production of NAD regulates oscillation of clock target gene expression by releasing the core clock component: CLOCK-BMAL1 heterodimer from NAD-dependent SIRT1-mediated suppression. This Sus scrofa (Pig) protein is Nicotinamide phosphoribosyltransferase (NAMPT).